Reading from the N-terminus, the 1203-residue chain is Cingulin (1203 aa).

The interval 7 to 357 (MAEPRGPVDH…VMVSSGSTKA (351 aa)) is head. Residues 25–48 (EPVSGAEMGTLRRGGRRPAKDARA) form a disordered region. Positions 48-62 (ASTYGVAVRVQGIAG) match the ZIM motif. The tract at residues 54-67 (AVRVQGIAGQPFVV) is interaction with TJP1/ZO1. Positions 89 to 127 (GASGALSSDLELPENPYSQVKGFPAPSQSSTSDEEPGAY) are disordered. A phosphoserine mark is found at Ser95, Ser96, Ser135, Ser137, Ser140, Ser155, Ser165, Ser214, Ser217, Ser258, Ser276, Ser338, and Ser351. Residues 186-266 (DSQLGGQARG…LSPLSGFSRS (81 aa)) form a disordered region. Residues 207-231 (EQRKRSKSLDSRLPRDTFEERERQS) are compositionally biased toward basic and acidic residues. A compositionally biased stretch (polar residues) spans 232 to 266 (TNHWTSSTKYDNHVGTSKQPAQSQNLSPLSGFSRS). The stretch at 358 to 1160 (VAGQGELTRK…SLEKDSWRKA (803 aa)) forms a coiled coil. An N6-acetyllysine modification is found at Lys579. Thr712 bears the Phosphothreonine mark. 2 disordered regions span residues 1034-1053 (LASS…LESQ) and 1154-1181 (KDSW…EEFD). Low complexity predominate over residues 1044-1053 (SASLSQLESQ). The tail stretch occupies residues 1161-1203 (SRSAAESALKNEGLSSDEEFDSVYDPSSIASLLTESNLQTSSC). A phosphoserine mark is found at Ser1175, Ser1176, and Ser1182.

Belongs to the cingulin family. Homodimer. Interacts with TJP1/ZO1. Interacts with SPEF1. In terms of tissue distribution, localized on the cytoplasmic face of tight junctions of polarized epithelia and some endothelia. Expressed in pancreas, kidney, liver and lung, but not in skeletal muscle, placenta, brain or heart.

The protein resides in the cell junction. It is found in the tight junction. In terms of biological role, probably plays a role in the formation and regulation of the tight junction (TJ) paracellular permeability barrier. This Homo sapiens (Human) protein is Cingulin.